The chain runs to 85 residues: Large ribosomal subunit protein bL27 (85 aa).

The disordered stretch occupies residues methionine 1–methionine 20.

This sequence belongs to the bacterial ribosomal protein bL27 family.

The sequence is that of Large ribosomal subunit protein bL27 from Acinetobacter baumannii (strain AB307-0294).